We begin with the raw amino-acid sequence, 837 residues long: Valine--tRNA ligase (837 aa).

Residues 46 to 56 carry the 'HIGH' region motif; that stretch reads PNLTGTLHIGH. Positions 514–518 match the 'KMSKS' region motif; it reads KMSKS. Lys517 is an ATP binding site. A coiled-coil region spans residues 767-837; the sequence is VDDTTQRLKS…QLIAKLTKAH (71 aa).

Belongs to the class-I aminoacyl-tRNA synthetase family. ValS type 1 subfamily. As to quaternary structure, monomer.

It localises to the cytoplasm. The catalysed reaction is tRNA(Val) + L-valine + ATP = L-valyl-tRNA(Val) + AMP + diphosphate. Its function is as follows. Catalyzes the attachment of valine to tRNA(Val). As ValRS can inadvertently accommodate and process structurally similar amino acids such as threonine, to avoid such errors, it has a 'posttransfer' editing activity that hydrolyzes mischarged Thr-tRNA(Val) in a tRNA-dependent manner. This is Valine--tRNA ligase from Mycoplasma genitalium (strain ATCC 33530 / DSM 19775 / NCTC 10195 / G37) (Mycoplasmoides genitalium).